Here is a 259-residue protein sequence, read N- to C-terminus: Flap endonuclease Xni (259 aa).

Residue aspartate 109 participates in Mg(2+) binding. The 5'-3' exonuclease domain occupies 165–255 (LKPEQLADYW…FNLQDIRYEK (91 aa)). Positions 176, 177, 187, and 190 each coordinate K(+). An interaction with DNA region spans residues 189-194 (GVGPKA).

It belongs to the Xni family. Mg(2+) serves as cofactor. The cofactor is K(+).

Functionally, has flap endonuclease activity. During DNA replication, flap endonucleases cleave the 5'-overhanging flap structure that is generated by displacement synthesis when DNA polymerase encounters the 5'-end of a downstream Okazaki fragment. In Aliivibrio fischeri (strain ATCC 700601 / ES114) (Vibrio fischeri), this protein is Flap endonuclease Xni.